We begin with the raw amino-acid sequence, 131 residues long: Small ribosomal subunit protein uS8 (131 aa).

Belongs to the universal ribosomal protein uS8 family. Part of the 30S ribosomal subunit. Contacts proteins S5 and S12.

In terms of biological role, one of the primary rRNA binding proteins, it binds directly to 16S rRNA central domain where it helps coordinate assembly of the platform of the 30S subunit. The polypeptide is Small ribosomal subunit protein uS8 (Laribacter hongkongensis (strain HLHK9)).